The sequence spans 91 residues: MSKGQSLQDPFLNALRRERVPVSVYLVNGIKLQGTIESFDQFVVLLRNTVSQMVYKHAISTVVPARNVKVGPGGGYVQSGEGGQAGDEADE.

One can recognise a Sm domain in the interval 9-68 (DPFLNALRRERVPVSVYLVNGIKLQGTIESFDQFVVLLRNTVSQMVYKHAISTVVPARNV).

The protein belongs to the Hfq family. Homohexamer.

RNA chaperone that binds small regulatory RNA (sRNAs) and mRNAs to facilitate mRNA translational regulation in response to envelope stress, environmental stress and changes in metabolite concentrations. Also binds with high specificity to tRNAs. This is RNA-binding protein Hfq from Stenotrophomonas maltophilia (strain K279a).